Here is a 321-residue protein sequence, read N- to C-terminus: Probable arabinan endo-1,5-alpha-L-arabinosidase C (321 aa).

The N-terminal stretch at 1–18 (MYLYTLILLFLASANVNA) is a signal peptide. The Proton acceptor role is filled by aspartate 33. N-linked (GlcNAc...) asparagine glycosylation is present at asparagine 192. Glutamate 200 functions as the Proton donor in the catalytic mechanism. Asparagine 224 is a glycosylation site (N-linked (GlcNAc...) asparagine).

The protein belongs to the glycosyl hydrolase 43 family.

It localises to the secreted. It carries out the reaction Endohydrolysis of (1-&gt;5)-alpha-arabinofuranosidic linkages in (1-&gt;5)-arabinans.. The protein operates within glycan metabolism; L-arabinan degradation. Its function is as follows. Endo-1,5-alpha-L-arabinanase involved in degradation of pectin. Its preferred substrate is linear 1,5-alpha-L-arabinan. The polypeptide is Probable arabinan endo-1,5-alpha-L-arabinosidase C (abnC) (Aspergillus fumigatus (strain ATCC MYA-4609 / CBS 101355 / FGSC A1100 / Af293) (Neosartorya fumigata)).